We begin with the raw amino-acid sequence, 190 residues long: Small ribosomal subunit protein uS5 (190 aa).

Residues 22 to 85 (FVDKLVHINR…ESAKRNLTRV (64 aa)) enclose the S5 DRBM domain.

This sequence belongs to the universal ribosomal protein uS5 family. Part of the 30S ribosomal subunit. Contacts proteins S4 and S8.

With S4 and S12 plays an important role in translational accuracy. Its function is as follows. Located at the back of the 30S subunit body where it stabilizes the conformation of the head with respect to the body. The protein is Small ribosomal subunit protein uS5 of Rhodopseudomonas palustris (strain BisA53).